We begin with the raw amino-acid sequence, 612 residues long: MEFSRETRRLALQKMQERDLDLLIIGGGITGAGVALQAAASGLDTGLIEMQDFAQGTSSRSTKLVHGGLRYLKQFDVEVVSDTVSERAVVQQIAPHIPKPDPMLLPVYDEPGSTFSMFRLKVAMDLYDLLAGVSNTPAANKVLTKEEVLKREPDLKQEGLLGGGVYLDFRNNDARLVIENIKRANRDGALIASHVKAEDFLLDDDGKIIGVKARDLLSDQEIIIKAKLVINTTGPWSDEIRQFSHKGQPIHQMRPTKGVHLVVDRQKLPVSQPVYVDTGLNDGRMVFVLPREEKTYFGTTDTDYTGDLEHPQVTQEDVDYLLGVVNNRFPNANVTIDDIESSWAGLRPLLSGNSASDYNGGNSGKVSDDSFDHLVDTVKAYINHEDSREAVEKAIKQVETSTSEKELDPSAVSRGSSFDRDENGLFTLAGGKITDYRKMAEGALTGIIQILKEEFGKSFKLINSKTYPVSGGEINPANVDLEIEAYAQLGTLSGLSMDDARYLANLYGSNAPKVFALTRQLTAAEGLSLAETLSLHYAMDYEMALKPTDYFLRRTNHLLFMRDSLDALIDPVINEMAKHFEWSDQERVAQEDDLRRVIADNDLSALKGHQEG.

An FAD-binding site is contributed by 21–49; sequence DLLIIGGGITGAGVALQAAASGLDTGLIE. A compositionally biased stretch (basic and acidic residues) spans 398–408; it reads VETSTSEKELD. The interval 398 to 418 is disordered; it reads VETSTSEKELDPSAVSRGSSF.

The protein belongs to the FAD-dependent glycerol-3-phosphate dehydrogenase family. FAD is required as a cofactor.

The protein localises to the cytoplasm. It catalyses the reaction sn-glycerol 3-phosphate + O2 = dihydroxyacetone phosphate + H2O2. The chain is Alpha-glycerophosphate oxidase (glpO) from Streptococcus pyogenes serotype M3 (strain ATCC BAA-595 / MGAS315).